We begin with the raw amino-acid sequence, 596 residues long: Bromodomain-containing protein 9 (596 aa).

Residues 1–10 (MGKKHKKHKS) show a composition bias toward basic residues. 2 disordered regions span residues 1–31 (MGKK…QYYV) and 49–119 (EVTE…SEGE). Basic and acidic residues predominate over residues 61–73 (SFYEDRSDHERER). Residues 74 to 84 (HKEKKKKKKKK) show a composition bias toward basic residues. Positions 85 to 98 (SEKEKDKYLDEDER) are enriched in basic and acidic residues. The segment covering 99 to 109 (RRRKEEKKRKR) has biased composition (basic residues). Positions 148–252 (NESTPLQQLL…HTGFKMMSKQ (105 aa)) constitute a Bromo domain. The histone H4K5ac H4K8ac and histone H4K5bu H4K8bu binding stretch occupies residues 226-228 (TYN). Residues 537-547 (DFHDVHNDRGG) are compositionally biased toward basic and acidic residues. The disordered stretch occupies residues 537-596 (DFHDVHNDRGGSRPSSSSSVSNNSERDHHLGSPSRISVGEQQDIHDPYEFLQSPETENQN). The span at 548–559 (SRPSSSSSVSNN) shows a compositional bias: low complexity.

As to quaternary structure, binds acetylated histones H3 and H4. Binds butyrylated histone H4.

Its subcellular location is the nucleus. Its function is as follows. Plays a role in chromatin remodeling and regulation of transcription. Acts as a chromatin reader that recognizes and binds acylated histones: binds histones that are acetylated and/or butyrylated. The sequence is that of Bromodomain-containing protein 9 (brd9) from Xenopus tropicalis (Western clawed frog).